We begin with the raw amino-acid sequence, 213 residues long: uncharacterized protein (213 aa).

This is an uncharacterized protein from Acanthamoeba polyphaga (Amoeba).